Here is a 116-residue protein sequence, read N- to C-terminus: Large ribosomal subunit protein uL18 (116 aa).

It belongs to the universal ribosomal protein uL18 family. In terms of assembly, part of the 50S ribosomal subunit; part of the 5S rRNA/L5/L18/L25 subcomplex. Contacts the 5S and 23S rRNAs.

This is one of the proteins that bind and probably mediate the attachment of the 5S RNA into the large ribosomal subunit, where it forms part of the central protuberance. This chain is Large ribosomal subunit protein uL18, found in Pseudoalteromonas translucida (strain TAC 125).